Consider the following 883-residue polypeptide: Translation initiation factor IF-2 (883 aa).

The segment at 118–261 is disordered; it reads VARESEAAPA…KKKEAFKKTE (144 aa). Over residues 124 to 150 the composition is skewed to low complexity; it reads AAPAEEPVAAAVKPASEPPVVQKAPVA. Composition is skewed to basic and acidic residues over residues 183-200 and 252-261; these read PADRREATAPKKRIEERI and KKKEAFKKTE. One can recognise a tr-type G domain in the interval 383 to 552; that stretch reads KRPPVVTIMG…LLQADVMDLK (170 aa). Positions 392–399 are G1; sequence GHVDHGKT. 392 to 399 lines the GTP pocket; it reads GHVDHGKT. A G2 region spans residues 417-421; it reads GITQH. Residues 438-441 form a G3 region; that stretch reads DTPG. GTP-binding positions include 438–442 and 492–495; these read DTPGH and NKID. The interval 492–495 is G4; the sequence is NKID. Positions 528 to 530 are G5; it reads SAK.

This sequence belongs to the TRAFAC class translation factor GTPase superfamily. Classic translation factor GTPase family. IF-2 subfamily.

Its subcellular location is the cytoplasm. In terms of biological role, one of the essential components for the initiation of protein synthesis. Protects formylmethionyl-tRNA from spontaneous hydrolysis and promotes its binding to the 30S ribosomal subunits. Also involved in the hydrolysis of GTP during the formation of the 70S ribosomal complex. The protein is Translation initiation factor IF-2 of Geobacter sulfurreducens (strain ATCC 51573 / DSM 12127 / PCA).